The sequence spans 313 residues: L-lactate dehydrogenase 1 (313 aa).

NAD(+) is bound by residues Val15, Asp36, Lys41, Tyr66, and 80-81 (GA). Substrate contacts are provided by Gln83 and Arg89. NAD(+) is bound by residues Ser102, 119–121 (VSN), and Ser144. 121–124 (NPVD) contacts substrate. Residue 149–152 (DTSR) participates in substrate binding. Arg154 and His169 together coordinate beta-D-fructose 1,6-bisphosphate. The active-site Proton acceptor is His176. Tyr222 is subject to Phosphotyrosine. Thr231 provides a ligand contact to substrate.

Belongs to the LDH/MDH superfamily. LDH family. In terms of assembly, homotetramer.

It localises to the cytoplasm. It catalyses the reaction (S)-lactate + NAD(+) = pyruvate + NADH + H(+). Its pathway is fermentation; pyruvate fermentation to lactate; (S)-lactate from pyruvate: step 1/1. Its activity is regulated as follows. Allosterically activated by fructose 1,6-bisphosphate (FBP). Functionally, catalyzes the conversion of lactate to pyruvate. The sequence is that of L-lactate dehydrogenase 1 from Clostridium acetobutylicum (strain ATCC 824 / DSM 792 / JCM 1419 / IAM 19013 / LMG 5710 / NBRC 13948 / NRRL B-527 / VKM B-1787 / 2291 / W).